The sequence spans 254 residues: Uridylate kinase (254 aa).

9–12 is an ATP binding site; that stretch reads KLSG. Gly51 contacts UMP. Positions 52 and 56 each coordinate ATP. Residues Asp72 and 133–140 contribute to the UMP site; that span reads SGNPFFTT. 3 residues coordinate ATP: Thr160, Tyr166, and Asp169.

It belongs to the UMP kinase family. In terms of assembly, homohexamer.

It localises to the cytoplasm. It catalyses the reaction UMP + ATP = UDP + ADP. It functions in the pathway pyrimidine metabolism; CTP biosynthesis via de novo pathway; UDP from UMP (UMPK route): step 1/1. Inhibited by UTP. Its function is as follows. Catalyzes the reversible phosphorylation of UMP to UDP. In Synechococcus sp. (strain JA-3-3Ab) (Cyanobacteria bacterium Yellowstone A-Prime), this protein is Uridylate kinase.